Here is a 167-residue protein sequence, read N- to C-terminus: Probable chemoreceptor glutamine deamidase CheD (167 aa).

Belongs to the CheD family.

The enzyme catalyses L-glutaminyl-[protein] + H2O = L-glutamyl-[protein] + NH4(+). Functionally, probably deamidates glutamine residues to glutamate on methyl-accepting chemotaxis receptors (MCPs), playing an important role in chemotaxis. The sequence is that of Probable chemoreceptor glutamine deamidase CheD from Moorella thermoacetica (strain ATCC 39073 / JCM 9320).